The primary structure comprises 215 residues: Pyridoxine/pyridoxamine 5'-phosphate oxidase (215 aa).

Substrate is bound by residues 9–12 (RRDY) and K69. Residues 64–69 (RVLLLK), 79–80 (FT), K86, and Q108 each bind FMN. 3 residues coordinate substrate: Y126, R130, and S134. Residues 143–144 (QS) and W188 contribute to the FMN site. 194-196 (RLH) is a binding site for substrate. R198 provides a ligand contact to FMN.

It belongs to the pyridoxamine 5'-phosphate oxidase family. As to quaternary structure, homodimer. Requires FMN as cofactor.

The catalysed reaction is pyridoxamine 5'-phosphate + O2 + H2O = pyridoxal 5'-phosphate + H2O2 + NH4(+). The enzyme catalyses pyridoxine 5'-phosphate + O2 = pyridoxal 5'-phosphate + H2O2. Its pathway is cofactor metabolism; pyridoxal 5'-phosphate salvage; pyridoxal 5'-phosphate from pyridoxamine 5'-phosphate: step 1/1. It functions in the pathway cofactor metabolism; pyridoxal 5'-phosphate salvage; pyridoxal 5'-phosphate from pyridoxine 5'-phosphate: step 1/1. Catalyzes the oxidation of either pyridoxine 5'-phosphate (PNP) or pyridoxamine 5'-phosphate (PMP) into pyridoxal 5'-phosphate (PLP). This chain is Pyridoxine/pyridoxamine 5'-phosphate oxidase, found in Pseudomonas putida (strain W619).